A 728-amino-acid chain; its full sequence is E3 ubiquitin-protein ligase TRIM36 (728 aa).

An RING-type; degenerate zinc finger spans residues 33–84 (CPACKELFTHPLILPCQHSICHKCVKELLLTLDDSFNDVGSDNSNQSSPRLR). 2 consecutive B box-type zinc fingers follow at residues 154-192 (AIMCDLCKPPPQESTKSCMDCSASYCNECFKIHHPWGTI) and 207-249 (PKIL…VTTM). Zn(2+) contacts are provided by Cys-212, His-215, Cys-235, and His-241. A coiled-coil region spans residues 271 to 345 (ESQVKSQISE…MEEYQGLLEN (75 aa)). The 58-residue stretch at 356–413 (LKETDQSCFVQTAKQLHLRIQKATESLKSFRPAAQTSFEDYVVNTSKQTELLGELSFF) folds into the COS domain. Positions 419–510 (VPEINEEQSK…RELILHTPPA (92 aa)) constitute a Fibronectin type-III domain. Residues 508-720 (PPAPVFSFLF…IQLEEPITAK (213 aa)) form the B30.2/SPRY domain.

Belongs to the TRIM/RBCC family. As to quaternary structure, interacts with CENPH. Highly expressed in testis, prostate and brain. Weakly expressed in kidney, lung and heart. Expressed in fetal tissues.

It is found in the cytoplasm. The protein localises to the cytoplasmic vesicle. Its subcellular location is the secretory vesicle. The protein resides in the acrosome. It localises to the cytoskeleton. It catalyses the reaction S-ubiquitinyl-[E2 ubiquitin-conjugating enzyme]-L-cysteine + [acceptor protein]-L-lysine = [E2 ubiquitin-conjugating enzyme]-L-cysteine + N(6)-ubiquitinyl-[acceptor protein]-L-lysine.. Its function is as follows. E3 ubiquitin-protein ligase which mediates ubiquitination and subsequent proteasomal degradation of target proteins. Involved in chromosome segregation and cell cycle regulation. May play a role in the acrosome reaction and fertilization. The sequence is that of E3 ubiquitin-protein ligase TRIM36 (TRIM36) from Homo sapiens (Human).